An 821-amino-acid polypeptide reads, in one-letter code: Leucine--tRNA ligase (821 aa).

The 'HIGH' region motif lies at 42–52 (PYPSGKLHMGH). A 'KMSKS' region motif is present at residues 583 to 587 (KMSKS). K586 provides a ligand contact to ATP.

Belongs to the class-I aminoacyl-tRNA synthetase family.

It is found in the cytoplasm. The enzyme catalyses tRNA(Leu) + L-leucine + ATP = L-leucyl-tRNA(Leu) + AMP + diphosphate. In Carboxydothermus hydrogenoformans (strain ATCC BAA-161 / DSM 6008 / Z-2901), this protein is Leucine--tRNA ligase.